A 371-amino-acid polypeptide reads, in one-letter code: 4-hydroxy-3-methylbut-2-en-1-yl diphosphate synthase (flavodoxin) (371 aa).

The [4Fe-4S] cluster site is built by C270, C273, C305, and E312.

Belongs to the IspG family. The cofactor is [4Fe-4S] cluster.

The enzyme catalyses (2E)-4-hydroxy-3-methylbut-2-enyl diphosphate + oxidized [flavodoxin] + H2O + 2 H(+) = 2-C-methyl-D-erythritol 2,4-cyclic diphosphate + reduced [flavodoxin]. The protein operates within isoprenoid biosynthesis; isopentenyl diphosphate biosynthesis via DXP pathway; isopentenyl diphosphate from 1-deoxy-D-xylulose 5-phosphate: step 5/6. Converts 2C-methyl-D-erythritol 2,4-cyclodiphosphate (ME-2,4cPP) into 1-hydroxy-2-methyl-2-(E)-butenyl 4-diphosphate. This chain is 4-hydroxy-3-methylbut-2-en-1-yl diphosphate synthase (flavodoxin), found in Shewanella piezotolerans (strain WP3 / JCM 13877).